The sequence spans 299 residues: Maintenance of mitochondrial morphology protein 1 (299 aa).

Residues 1 to 15 are Lumenal-facing; it reads MTNIIFSLQPTFTQG. Residues 16–36 traverse the membrane as a helical segment; it reads LILGQLSVLVLLGLILKYLFL. At 37–299 the chain is on the cytoplasmic side; sequence DSTKNPFETT…QEESKRQEEA (263 aa). Residues 47–68 are disordered; that stretch reads SYHPQFDRKPARKQQAQDSQSQ. Residues 73-281 enclose the SMP-LTD domain; sequence DVESLDWFNL…LPGLASVAEA (209 aa).

This sequence belongs to the MMM1 family. In terms of assembly, homodimer. Component of the ER-mitochondria encounter structure (ERMES) or MDM complex, composed of MMM1, MDM10, MDM12 and MDM34. An MMM1 homodimer associates with one molecule of MDM12 on each side in a pairwise head-to-tail manner, and the SMP-LTD domains of MMM1 and MDM12 generate a continuous hydrophobic tunnel for phospholipid trafficking.

Its subcellular location is the endoplasmic reticulum membrane. In terms of biological role, component of the ERMES/MDM complex, which serves as a molecular tether to connect the endoplasmic reticulum (ER) and mitochondria. Components of this complex are involved in the control of mitochondrial shape and protein biogenesis, and function in nonvesicular lipid trafficking between the ER and mitochondria. The MDM12-MMM1 subcomplex functions in the major beta-barrel assembly pathway that is responsible for biogenesis of all outer membrane beta-barrel proteins, and acts in a late step after the SAM complex. The MDM10-MDM12-MMM1 subcomplex further acts in the TOM40-specific pathway after the action of the MDM12-MMM1 complex. Essential for establishing and maintaining the structure of mitochondria and maintenance of mtDNA nucleoids. The protein is Maintenance of mitochondrial morphology protein 1 of Coprinopsis cinerea (strain Okayama-7 / 130 / ATCC MYA-4618 / FGSC 9003) (Inky cap fungus).